Reading from the N-terminus, the 160-residue chain is Transcription elongation factor GreA (160 aa).

The stretch at 50 to 70 (AAREQQSFNEGRIQELEAKLS) forms a coiled coil.

It belongs to the GreA/GreB family.

Functionally, necessary for efficient RNA polymerase transcription elongation past template-encoded arresting sites. The arresting sites in DNA have the property of trapping a certain fraction of elongating RNA polymerases that pass through, resulting in locked ternary complexes. Cleavage of the nascent transcript by cleavage factors such as GreA or GreB allows the resumption of elongation from the new 3'terminus. GreA releases sequences of 2 to 3 nucleotides. The protein is Transcription elongation factor GreA of Legionella pneumophila (strain Paris).